We begin with the raw amino-acid sequence, 474 residues long: MPTTETKTGAGFKAGVKDYRLTYYTPDYQVKETDILAAFRMTPQPGVPPEECGAAVAAESSTGTWTTVWTDGLTSLDRYKGRCYDLEPVPGEENQYIAYIAYPIDLFEEGSVTNLFTSIVGNVFGFKALRALRLEDLRIPPAYVKTFQGPPHGIQAERDRLNKYGRGLLGCTIKPKLGLSAKNYGRAVYECLRGGLDFTKDDENVNSQPFMRWRDRFLFVSEAIYKAQAETGEIKGHYLNATAPDCEEMYKRAECAKDFGVPIIMHDYLTGGFTANTSLATYCRDNGLLLHIHRAMHAVIDRQRNHGIHFRVLAKALRLSGGDHLHSGTVVGKLEGEREVTLGFVDLMRDDYIEKDRSRGIYFTQDWCSLPGTMPVASGGIHVWHMPALVEIFGDDACLQFGGGTLGHPWGNAPGAAANRVALEACTQARNEGRDLAREGGDVIRQACQWSPELAAACEVWKEIKFEFETIDTL.

Pro2 is subject to N-acetylproline. Lys13 bears the N6,N6,N6-trimethyllysine mark. Substrate is bound by residues Asn122 and Thr172. Residue Lys174 is the Proton acceptor of the active site. A substrate-binding site is contributed by Lys176. 3 residues coordinate Mg(2+): Lys200, Asp202, and Glu203. Position 200 is an N6-carboxylysine (Lys200). His293 serves as the catalytic Proton acceptor. Residues Arg294, His326, and Ser378 each contribute to the substrate site.

Belongs to the RuBisCO large chain family. Type I subfamily. As to quaternary structure, heterohexadecamer of 8 large chains and 8 small chains; disulfide-linked. The disulfide link is formed within the large subunit homodimers. The cofactor is Mg(2+). Post-translationally, the disulfide bond which can form in the large chain dimeric partners within the hexadecamer appears to be associated with oxidative stress and protein turnover.

It is found in the plastid. The protein localises to the chloroplast. It carries out the reaction 2 (2R)-3-phosphoglycerate + 2 H(+) = D-ribulose 1,5-bisphosphate + CO2 + H2O. The catalysed reaction is D-ribulose 1,5-bisphosphate + O2 = 2-phosphoglycolate + (2R)-3-phosphoglycerate + 2 H(+). RuBisCO catalyzes two reactions: the carboxylation of D-ribulose 1,5-bisphosphate, the primary event in carbon dioxide fixation, as well as the oxidative fragmentation of the pentose substrate in the photorespiration process. Both reactions occur simultaneously and in competition at the same active site. This chain is Ribulose bisphosphate carboxylase large chain, found in Oltmannsiellopsis viridis (Marine flagellate).